We begin with the raw amino-acid sequence, 410 residues long: F-box/WD repeat-containing protein 4 (410 aa).

In terms of domain architecture, F-box spans Gly-23 to Ile-69. WD repeat units follow at residues Gly-159 to Tyr-196, Ala-198 to Cys-235, Pro-289 to Val-327, and Pro-333 to Ala-372.

In terms of assembly, part of a SCF (SKP1-cullin-F-box) protein ligase complex. Interacts with POUF51.

In terms of biological role, probably recognizes and binds to some phosphorylated proteins and promotes their ubiquitination and degradation. Likely to be involved in key signaling pathways crucial for normal limb development. May participate in Wnt signaling. The polypeptide is F-box/WD repeat-containing protein 4 (Fbxw4) (Mus musculus (Mouse)).